Consider the following 67-residue polypeptide: Ayadualin (67 aa).

The N-terminal stretch at 1-20 is a signal peptide; it reads MNKIILFSAVFLALVFCAEA. Over residues 35-54 the composition is skewed to acidic residues; that stretch reads PDDTVDIDEGLPDAFDEDYE. The disordered stretch occupies residues 35–67; the sequence is PDDTVDIDEGLPDAFDEDYEQDGHNPYPCRGDC. The Integrin-binding motif motif lies at 64–66; it reads RGD.

Salivary gland.

The protein localises to the secreted. Inhibits collagen- and ADP-induced host platelet aggregation by blocking the binding of host integrin alpha-IIb/beta-3 (ITGA2B/ITGB3) to fibrinogen. Inhibits the intrinsic blood coagulation pathway in the host by blocking the activity of host coagulation factor XIIa (F12). This chain is Ayadualin, found in Lutzomyia ayacuchensis (Sand fly).